The following is a 393-amino-acid chain: S-adenosylmethionine synthase (393 aa).

H16 serves as a coordination point for ATP. Residue D18 coordinates Mg(2+). Residue E44 coordinates K(+). L-methionine-binding residues include E57 and Q100. The segment at 100 to 110 (QSNDIAQGVDH) is flexible loop. ATP-binding positions include 167-169 (DAK), 238-239 (RF), D247, 253-254 (RK), A270, and K274. D247 lines the L-methionine pocket. K278 lines the L-methionine pocket.

The protein belongs to the AdoMet synthase family. Homotetramer; dimer of dimers. It depends on Mg(2+) as a cofactor. K(+) is required as a cofactor.

Its subcellular location is the cytoplasm. The enzyme catalyses L-methionine + ATP + H2O = S-adenosyl-L-methionine + phosphate + diphosphate. Its pathway is amino-acid biosynthesis; S-adenosyl-L-methionine biosynthesis; S-adenosyl-L-methionine from L-methionine: step 1/1. In terms of biological role, catalyzes the formation of S-adenosylmethionine (AdoMet) from methionine and ATP. The overall synthetic reaction is composed of two sequential steps, AdoMet formation and the subsequent tripolyphosphate hydrolysis which occurs prior to release of AdoMet from the enzyme. This is S-adenosylmethionine synthase from Acidovorax ebreus (strain TPSY) (Diaphorobacter sp. (strain TPSY)).